A 37-amino-acid chain; its full sequence is Desulforedoxin (37 aa).

Fe cation contacts are provided by C10, C13, C29, and C30.

The protein to the N-terminal section of desulfoferrodoxin. In terms of assembly, homodimer. Requires Fe cation as cofactor.

In terms of biological role, nonheme iron protein possibly involved in electron transport. The chain is Desulforedoxin (dsr) from Megalodesulfovibrio gigas (Desulfovibrio gigas).